The following is a 127-amino-acid chain: Ribosome-binding factor A (127 aa).

Belongs to the RbfA family. As to quaternary structure, monomer. Binds 30S ribosomal subunits, but not 50S ribosomal subunits or 70S ribosomes.

The protein resides in the cytoplasm. Its function is as follows. One of several proteins that assist in the late maturation steps of the functional core of the 30S ribosomal subunit. Associates with free 30S ribosomal subunits (but not with 30S subunits that are part of 70S ribosomes or polysomes). Required for efficient processing of 16S rRNA. May interact with the 5'-terminal helix region of 16S rRNA. The sequence is that of Ribosome-binding factor A from Actinobacillus pleuropneumoniae serotype 7 (strain AP76).